A 219-amino-acid polypeptide reads, in one-letter code: Putative germin-like protein 8-1 (219 aa).

The N-terminal stretch at 1–23 is a signal peptide; sequence MASFISFLLLAALIGMASWQAIA. Cysteines 33 and 48 form a disulfide. N-linked (GlcNAc...) asparagine glycans are attached at residues asparagine 53 and asparagine 79. The 153-residue stretch at 63–215 folds into the Cupin type-1 domain; sequence AMLDKPRDTA…AFQVDKKIID (153 aa). The Mn(2+) site is built by histidine 112, histidine 114, glutamate 119, and histidine 160.

Belongs to the germin family. Oligomer (believed to be a pentamer but probably hexamer).

It localises to the secreted. Its subcellular location is the extracellular space. It is found in the apoplast. Plays a role in broad-spectrum disease resistance. Probably has no oxalate oxidase activity even if the active site is conserved. This is Putative germin-like protein 8-1 from Oryza sativa subsp. japonica (Rice).